A 662-amino-acid polypeptide reads, in one-letter code: Intracellular exo-alpha-(1-&gt;5)-L-arabinofuranosidase (662 aa).

The alpha-L-arabinofuranose site is built by glutamate 27, asparagine 72, and asparagine 174. Glutamate 175 serves as the catalytic Proton donor/acceptor. Positions 246, 294, and 352 each coordinate alpha-L-arabinofuranose. Catalysis depends on glutamate 294, which acts as the Nucleophile. 3 disordered regions span residues 454-483 (LADA…SLRD), 497-548 (SIRC…RTAR), and 588-662 (WTRW…ARRC). Residues 519-533 (TGTPPAAPPSSSSAP) show a composition bias toward low complexity. The span at 537–547 (PTARRSPDRTA) shows a compositional bias: basic and acidic residues. Composition is skewed to low complexity over residues 590-603 (RWAP…PSRR), 628-641 (RRSP…TPAP), and 649-662 (AGAS…ARRC).

It belongs to the glycosyl hydrolase 51 family. In terms of assembly, homohexamer; trimer of dimers.

Its subcellular location is the cytoplasm. It catalyses the reaction Hydrolysis of terminal non-reducing alpha-L-arabinofuranoside residues in alpha-L-arabinosides.. It participates in glycan metabolism; L-arabinan degradation. In terms of biological role, involved in the degradation of arabinan and is a key enzyme in the complete degradation of the plant cell wall. Catalyzes the cleavage of terminal alpha-(1-&gt;5)-arabinofuranosyl bonds in different hemicellulosic homopolysaccharides (arabino-oligoxylosides, branched and debranched arabinans). It acts rapidly on the short-chain arabino-oligoxylosides from digestion of xylan with xylanases. It hydrolyzes slowly arabinan and arabinoxylan from wheat and rye flour. The polypeptide is Intracellular exo-alpha-(1-&gt;5)-L-arabinofuranosidase (Streptomyces lividans).